A 309-amino-acid polypeptide reads, in one-letter code: Ribosomal RNA small subunit methyltransferase H (309 aa).

S-adenosyl-L-methionine is bound by residues 33–35 (GGH), aspartate 53, phenylalanine 79, aspartate 100, and glutamine 107.

It belongs to the methyltransferase superfamily. RsmH family.

It localises to the cytoplasm. It catalyses the reaction cytidine(1402) in 16S rRNA + S-adenosyl-L-methionine = N(4)-methylcytidine(1402) in 16S rRNA + S-adenosyl-L-homocysteine + H(+). In terms of biological role, specifically methylates the N4 position of cytidine in position 1402 (C1402) of 16S rRNA. This is Ribosomal RNA small subunit methyltransferase H from Clostridium botulinum (strain Kyoto / Type A2).